The chain runs to 502 residues: ATP synthase subunit alpha (502 aa).

169-176 (GDRQTGKT) contributes to the ATP binding site.

This sequence belongs to the ATPase alpha/beta chains family. In terms of assembly, F-type ATPases have 2 components, CF(1) - the catalytic core - and CF(0) - the membrane proton channel. CF(1) has five subunits: alpha(3), beta(3), gamma(1), delta(1), epsilon(1). CF(0) has three main subunits: a(1), b(2) and c(9-12). The alpha and beta chains form an alternating ring which encloses part of the gamma chain. CF(1) is attached to CF(0) by a central stalk formed by the gamma and epsilon chains, while a peripheral stalk is formed by the delta and b chains.

It is found in the cell inner membrane. It catalyses the reaction ATP + H2O + 4 H(+)(in) = ADP + phosphate + 5 H(+)(out). Functionally, produces ATP from ADP in the presence of a proton gradient across the membrane. The alpha chain is a regulatory subunit. This Citrifermentans bemidjiense (strain ATCC BAA-1014 / DSM 16622 / JCM 12645 / Bem) (Geobacter bemidjiensis) protein is ATP synthase subunit alpha.